Consider the following 172-residue polypeptide: Transcription factor MafF (172 aa).

The segment at 51-76 (RLKQRRRTLKNRGYAASCRVKRVCQK) is basic motif. The region spanning 51-114 (RLKQRRRTLK…DALRGKCEAL (64 aa)) is the bZIP domain. The interval 79–93 (LQKQKSELEREVDKL) is leucine-zipper. The interval 140–172 (VKSAPSPGPGPAPGPGPASGPGPAPGPAPAACS) is disordered. Positions 145 to 172 (SPGPGPAPGPGPASGPGPAPGPAPAACS) are enriched in pro residues.

It belongs to the bZIP family. Maf subfamily. In terms of assembly, monomer and homo- or heterodimer. Interacts with MIP. Forms high affinity heterodimers with members of the CNC-bZIP family such as NFE2L1/NRF1.

The protein resides in the nucleus. Since they lack a putative transactivation domain, the small Mafs behave as transcriptional repressors when they dimerize among themselves. However, they seem to serve as transcriptional activators by dimerizing with other (usually larger) basic-zipper proteins, such as NFE2L1/NRF1, and recruiting them to specific DNA-binding sites. Interacts with the upstream promoter region of the oxytocin receptor gene. May be a transcriptional enhancer in the up-regulation of the oxytocin receptor gene at parturition. This Bos taurus (Bovine) protein is Transcription factor MafF (MAFF).